A 234-amino-acid chain; its full sequence is Probable porphobilinogen deaminase (234 aa).

This sequence belongs to the HMBS family.

The catalysed reaction is 4 porphobilinogen + H2O = hydroxymethylbilane + 4 NH4(+). Its pathway is porphyrin-containing compound metabolism; protoporphyrin-IX biosynthesis; coproporphyrinogen-III from 5-aminolevulinate: step 2/4. In terms of biological role, tetrapolymerization of the monopyrrole PBG into the hydroxymethylbilane pre-uroporphyrinogen in several discrete steps. This is Probable porphobilinogen deaminase (hemC) from Chlamydia pneumoniae (Chlamydophila pneumoniae).